Reading from the N-terminus, the 162-residue chain is UPF0262 protein AZC_3148 (162 aa).

Belongs to the UPF0262 family.

This is UPF0262 protein AZC_3148 from Azorhizobium caulinodans (strain ATCC 43989 / DSM 5975 / JCM 20966 / LMG 6465 / NBRC 14845 / NCIMB 13405 / ORS 571).